The sequence spans 145 residues: Large ribosomal subunit protein uL11 (145 aa).

It belongs to the universal ribosomal protein uL11 family. In terms of assembly, part of the ribosomal stalk of the 50S ribosomal subunit. Interacts with L10 and the large rRNA to form the base of the stalk. L10 forms an elongated spine to which L12 dimers bind in a sequential fashion forming a multimeric L10(L12)X complex. Post-translationally, one or more lysine residues are methylated.

Its function is as follows. Forms part of the ribosomal stalk which helps the ribosome interact with GTP-bound translation factors. The protein is Large ribosomal subunit protein uL11 of Rickettsia akari (strain Hartford).